The chain runs to 427 residues: Glutamate-1-semialdehyde 2,1-aminomutase (427 aa).

N6-(pyridoxal phosphate)lysine is present on Lys-265.

It belongs to the class-III pyridoxal-phosphate-dependent aminotransferase family. HemL subfamily. Homodimer. Requires pyridoxal 5'-phosphate as cofactor.

The protein resides in the cytoplasm. It catalyses the reaction (S)-4-amino-5-oxopentanoate = 5-aminolevulinate. Its pathway is porphyrin-containing compound metabolism; protoporphyrin-IX biosynthesis; 5-aminolevulinate from L-glutamyl-tRNA(Glu): step 2/2. This Pseudomonas syringae pv. syringae (strain B728a) protein is Glutamate-1-semialdehyde 2,1-aminomutase.